A 66-amino-acid polypeptide reads, in one-letter code: Regulator of G-protein signaling 11 (66 aa).

Positions 1-66 (EACEELRFGG…DAAQLHIYML (66 aa)) constitute an RGS domain.

As to quaternary structure, heterodimer with Gbeta5. Interacts with RGS7BP, leading to regulate the subcellular location of the heterodimer formed with Gbeta5.

In terms of biological role, inhibits signal transduction by increasing the GTPase activity of G protein alpha subunits thereby driving them into their inactive GDP-bound form. The sequence is that of Regulator of G-protein signaling 11 (Rgs11) from Rattus norvegicus (Rat).